Reading from the N-terminus, the 998-residue chain is Kinesin-like protein KIF19 (998 aa).

Positions 11-346 (QLMVALRVRP…LTYAGRAKNI (336 aa)) constitute a Kinesin motor domain. Residue 104–111 (GPTGCGKT) coordinates ATP. Coiled-coil stretches lie at residues 360-391 (HIAQ…RGQA) and 424-452 (EQLA…EVQI). Basic and acidic residues predominate over residues 482 to 494 (ECYAKDDSEKDSD). The disordered stretch occupies residues 482 to 503 (ECYAKDDSEKDSDTGDDQPDIL). The stretch at 507–552 (EVAAARESIAALVDEQKQLRKQKLALEQRCRELRARGRRLEETLPR) forms a coiled coil. Composition is skewed to polar residues over residues 662 to 676 (SSLP…SLTP), 684 to 697 (KTLS…QNSA), 746 to 761 (SLGS…SENL), and 836 to 852 (TLQH…STGE). 4 disordered regions span residues 662-706 (SSLP…TESE), 746-765 (SLGS…SEIP), 794-911 (GTEG…THLL), and 948-998 (KLPP…SRHN). The span at 989 to 998 (HGKDGCSRHN) shows a compositional bias: basic and acidic residues.

This sequence belongs to the TRAFAC class myosin-kinesin ATPase superfamily. Kinesin family.

It is found in the cytoplasm. It localises to the cytoskeleton. Its subcellular location is the cell projection. The protein localises to the cilium. Its function is as follows. Plus end-directed microtubule-dependent motor protein that regulates the length of motile cilia by mediating depolymerization of microtubules at ciliary tips. The chain is Kinesin-like protein KIF19 (KIF19) from Homo sapiens (Human).